A 160-amino-acid polypeptide reads, in one-letter code: MTKPLTKGEIVLFALRKAGIASEATNIDVEPQSFEEGINDLEDLMAELQITFGDLGYQFSAEEENPTSDDASGLPRKYKQVMGYQLMLRMLSDYGIEPTPRQEASAAAAYDALLTDTLSVPSIARRGDMPVGQGNNYTALGTASYYVERGFHAKNTDPVS.

This sequence to phage P22 gp4.

It localises to the virion. In terms of biological role, component of the cylindrical core that assembles on the inner surface of the capsid during procapsid formation. Required for stabilization of the condensed DNA within the capsid; perhaps by plugging the hole through which the DNA enters. Plays a role in ejection of the bacteriophage DNA into the host cell at the initiation of infection. Functions as an exolysin that catalyzes the cleavage of the glycosidic bonds between N-acetylmuramic acid and N-acetylglucosamine residues in peptidoglycans. This is Peptidoglycan hydrolase gp27 (27) from Acyrthosiphon pisum secondary endosymbiont phage 1 (Bacteriophage APSE-1).